We begin with the raw amino-acid sequence, 400 residues long: Argininosuccinate synthase (400 aa).

ATP-binding positions include 10–18 and Ala-38; that span reads AYSGGVDTS. Tyr-89 lines the L-citrulline pocket. Gly-119 provides a ligand contact to ATP. Thr-121, Asn-125, and Asp-126 together coordinate L-aspartate. Asn-125 provides a ligand contact to L-citrulline. L-citrulline-binding residues include Arg-129, Ser-177, Ser-186, Glu-262, and Tyr-274.

This sequence belongs to the argininosuccinate synthase family. Type 1 subfamily. Homotetramer.

The protein resides in the cytoplasm. It catalyses the reaction L-citrulline + L-aspartate + ATP = 2-(N(omega)-L-arginino)succinate + AMP + diphosphate + H(+). It participates in amino-acid biosynthesis; L-arginine biosynthesis; L-arginine from L-ornithine and carbamoyl phosphate: step 2/3. This is Argininosuccinate synthase from Crocosphaera subtropica (strain ATCC 51142 / BH68) (Cyanothece sp. (strain ATCC 51142)).